Consider the following 404-residue polypeptide: Tryptophan synthase beta chain (404 aa).

An N6-(pyridoxal phosphate)lysine modification is found at lysine 98.

Belongs to the TrpB family. As to quaternary structure, tetramer of two alpha and two beta chains. Pyridoxal 5'-phosphate serves as cofactor.

It carries out the reaction (1S,2R)-1-C-(indol-3-yl)glycerol 3-phosphate + L-serine = D-glyceraldehyde 3-phosphate + L-tryptophan + H2O. The protein operates within amino-acid biosynthesis; L-tryptophan biosynthesis; L-tryptophan from chorismate: step 5/5. Functionally, the beta subunit is responsible for the synthesis of L-tryptophan from indole and L-serine. In Rhodopseudomonas palustris (strain HaA2), this protein is Tryptophan synthase beta chain.